Here is a 289-residue protein sequence, read N- to C-terminus: Energy-coupling factor transporter ATP-binding protein EcfA2 (289 aa).

The ABC transporter domain occupies 3–246; sequence IEIKDVEHRY…KDDIAALGLD (244 aa). An ATP-binding site is contributed by 40–47; sequence GHTGSGKS.

The protein belongs to the ABC transporter superfamily. Energy-coupling factor EcfA family. In terms of assembly, forms a stable energy-coupling factor (ECF) transporter complex composed of 2 membrane-embedded substrate-binding proteins (S component), 2 ATP-binding proteins (A component) and 2 transmembrane proteins (T component).

The protein localises to the cell membrane. Its function is as follows. ATP-binding (A) component of a common energy-coupling factor (ECF) ABC-transporter complex. Unlike classic ABC transporters this ECF transporter provides the energy necessary to transport a number of different substrates. The sequence is that of Energy-coupling factor transporter ATP-binding protein EcfA2 from Bacillus licheniformis (strain ATCC 14580 / DSM 13 / JCM 2505 / CCUG 7422 / NBRC 12200 / NCIMB 9375 / NCTC 10341 / NRRL NRS-1264 / Gibson 46).